A 520-amino-acid polypeptide reads, in one-letter code: Putative lipase ATG15 (520 aa).

Residues Met-1 to Pro-14 are Cytoplasmic-facing. The chain crosses the membrane as a helical; Signal-anchor for type II membrane protein span at residues Leu-15–Leu-35. At Pro-36–Leu-520 the chain is on the lumenal side. Asn-173, Asn-202, and Asn-208 each carry an N-linked (GlcNAc...) asparagine glycan. The active-site Charge relay system is Ser-332.

It belongs to the AB hydrolase superfamily. Lipase family. As to quaternary structure, binds to both phosphatidylinositol (PI) and phosphatidylinositol 3,5-bisphosphate (PIP2).

The protein resides in the endosome. It is found in the multivesicular body membrane. The protein localises to the prevacuolar compartment membrane. The enzyme catalyses a triacylglycerol + H2O = a diacylglycerol + a fatty acid + H(+). Its function is as follows. Lipase which is essential for lysis of subvacuolar cytoplasm to vacuole targeted bodies and intravacuolar autophagic bodies. Involved in the lysis of intravacuolar multivesicular body (MVB) vesicles. The intravacuolar membrane disintegration by ATG15 is critical to life span extension. This chain is Putative lipase ATG15 (ATG15), found in Saccharomyces cerevisiae (strain YJM789) (Baker's yeast).